We begin with the raw amino-acid sequence, 430 residues long: MYLKQNLMSYLAQAIGELKSQIHAYLQQSTNELVRFQVKLDKVDLLAWLKGQSAYPQFYLHFRDEEKALAALGAVQSFSQLNLAQEFIEESGFPLVGGLQFQGTAQFVLPKMLVEQDNKGTLVSFFVKNEQSANDTLAHLKTFENLTALSALPKQIPLHTELRANERTWCDWVNQALVEIKSGELTKIVLANETTFHLKQAINAYDFLAESEKQNQGCYHFLWAENSHSVFVGSTPERLFAREYNLLLTEALAGTASVSESEEETQSQANWLLNDEKNLKENWLVVEDISQNLRKQVESFDVSNVELKPLRKVQHLIRKIRANLTAHYADVNILKAIHPTAAVSGLPQQQAKMILSEIETFDRGWYAGTLGVMSDVCSEFCVAIRSAFIEGHRIRVFAGAGIVAGSQPLEEWKEIERKAAGLISLFAEEK.

Lys-187 functions as the Proton acceptor in the catalytic mechanism. Glu-237 serves as the catalytic Proton donor. Positions 281 and 414 each coordinate Mg(2+).

It belongs to the isochorismate synthase family. Mg(2+) is required as a cofactor.

The enzyme catalyses chorismate = isochorismate. The protein operates within quinol/quinone metabolism; 1,4-dihydroxy-2-naphthoate biosynthesis; 1,4-dihydroxy-2-naphthoate from chorismate: step 1/7. It functions in the pathway quinol/quinone metabolism; menaquinone biosynthesis. Functionally, catalyzes the conversion of chorismate to isochorismate. The polypeptide is Isochorismate synthase MenF (Haemophilus influenzae (strain ATCC 51907 / DSM 11121 / KW20 / Rd)).